We begin with the raw amino-acid sequence, 741 residues long: Eukaryotic translation initiation factor 3 subunit B (741 aa).

The segment covering 1-10 (MAPSFDTLSE) has biased composition (polar residues). The disordered stretch occupies residues 1–21 (MAPSFDTLSEQDLHEEEEEEI). The RRM domain occupies 40 to 126 (TFIVIDGLPI…HTLAVNKLMD (87 aa)). WD repeat units lie at residues 193–230 (AHWTQLFVQWSPKGTYLASVHPQGVQLWGGPAFSKQKQ), 232–289 (PHPF…RSFV), 303–344 (APKK…LLGK), 514–557 (IEKK…EKAE), and 572–610 (VEHYGVTDIDWDPTGRYVVSSASVWTHSMENGWNIHTFA). The interval 696 to 723 (DAYGIPEDADDAKVAKDAPPVSEDQGEA) is disordered.

Belongs to the eIF-3 subunit B family. Component of the eukaryotic translation initiation factor 3 (eIF-3) complex.

The protein localises to the cytoplasm. Its function is as follows. RNA-binding component of the eukaryotic translation initiation factor 3 (eIF-3) complex, which is involved in protein synthesis of a specialized repertoire of mRNAs and, together with other initiation factors, stimulates binding of mRNA and methionyl-tRNAi to the 40S ribosome. The eIF-3 complex specifically targets and initiates translation of a subset of mRNAs involved in cell proliferation. This Aspergillus oryzae (strain ATCC 42149 / RIB 40) (Yellow koji mold) protein is Eukaryotic translation initiation factor 3 subunit B (prt1).